Consider the following 129-residue polypeptide: Small ribosomal subunit protein uS11 (129 aa).

It belongs to the universal ribosomal protein uS11 family. In terms of assembly, part of the 30S ribosomal subunit. Interacts with proteins S7 and S18. Binds to IF-3.

Located on the platform of the 30S subunit, it bridges several disparate RNA helices of the 16S rRNA. Forms part of the Shine-Dalgarno cleft in the 70S ribosome. The polypeptide is Small ribosomal subunit protein uS11 (Actinobacillus succinogenes (strain ATCC 55618 / DSM 22257 / CCUG 43843 / 130Z)).